The chain runs to 1378 residues: Cell surface hyaluronidase (1378 aa).

Residues 1–77 (MQVNDGPSSH…GNRREQAQNQ (77 aa)) form a disordered region. Over 1–82 (MQVNDGPSSH…QAQNQQRKNT (82 aa)) the chain is Cytoplasmic. A compositionally biased stretch (pro residues) spans 36-58 (RSPPPAKAPPPPPLKPPVPPPAR). A helical; Signal-anchor for type II membrane protein transmembrane segment spans residues 83-103 (YICVGIFFGIFLLILILVLSL). At 104–1378 (TSKDVLDENC…MDLELLKKIS (1275 aa)) the chain is on the extracellular side. Residues 121 to 247 (RSWKPGHDLK…ERMSWTFLTR (127 aa)) enclose the G8 domain. N171, N264, N360, N527, and N639 each carry an N-linked (GlcNAc...) asparagine glycan. Positions 257 to 414 (GDHAFQKNFS…YPTTGFQVDA (158 aa)) constitute a GG-type lectin 1 domain. The PbH1 1 repeat unit spans residues 672 to 694 (HPNNHLISNSAAGSQDAGIWYVF). The N-linked (GlcNAc...) asparagine glycan is linked to N696. The PbH1 2 repeat unit spans residues 714 to 736 (TPLGTFFNNRVHSNFKAGLFIDR). N-linked (GlcNAc...) asparagine glycosylation is found at N742, N854, N905, N996, N1069, N1160, and N1221. The GG-type lectin 2 domain maps to 1203 to 1363 (NSYLQTQIKS…LEEYSCPPKK (161 aa)).

The protein belongs to the CEMIP family. It depends on Ca(2+) as a cofactor.

It is found in the cell membrane. It carries out the reaction Random hydrolysis of (1-&gt;4)-linkages between N-acetyl-beta-D-glucosamine and D-glucuronate residues in hyaluronate.. Its function is as follows. Cell surface hyaluronidase that mediates the initial cleavage of extracellular high-molecular-weight hyaluronan into intermediate-size hyaluronan. Acts as a regulator of angiogenesis in embryos by mediating degradation of extracellular hyaluronan, thereby promoting VEGF signaling. Acts as a regulator of heart development during myocardial and endocardial morphogenesis: involved in the looping stage of heart morphogenesis. Stimulates migration of endocardial cells and increases both myocardial and endocardial fusion. Involved in the restriction of endocardial cushions (ECs) formation to the atrioventricular canal (AVC). Also required for muscle fiber attachment. Is very specific to hyaluronan; not able to cleave chondroitin sulfate or dermatan sulfate. The polypeptide is Cell surface hyaluronidase (cemip2) (Danio rerio (Zebrafish)).